The sequence spans 199 residues: 7-methyl-GTP pyrophosphatase (199 aa).

The active-site Proton acceptor is the Asp-76.

Belongs to the Maf family. YceF subfamily. A divalent metal cation is required as a cofactor.

The protein resides in the cytoplasm. The enzyme catalyses N(7)-methyl-GTP + H2O = N(7)-methyl-GMP + diphosphate + H(+). Functionally, nucleoside triphosphate pyrophosphatase that hydrolyzes 7-methyl-GTP (m(7)GTP). May have a dual role in cell division arrest and in preventing the incorporation of modified nucleotides into cellular nucleic acids. This Brucella abortus biovar 1 (strain 9-941) protein is 7-methyl-GTP pyrophosphatase.